We begin with the raw amino-acid sequence, 891 residues long: DNA mismatch repair protein MutS (891 aa).

634 to 641 is a binding site for ATP; that stretch reads GPNMGGKS.

Belongs to the DNA mismatch repair MutS family.

In terms of biological role, this protein is involved in the repair of mismatches in DNA. It is possible that it carries out the mismatch recognition step. This protein has a weak ATPase activity. This chain is DNA mismatch repair protein MutS, found in Burkholderia pseudomallei (strain 668).